The primary structure comprises 201 residues: GTP cyclohydrolase 1 (201 aa).

Residues 1–20 (MDATVKKMSPETSRPSREEA) are disordered. Zn(2+) is bound by residues Cys-91, His-94, and Cys-162.

This sequence belongs to the GTP cyclohydrolase I family. In terms of assembly, homomer.

It catalyses the reaction GTP + H2O = 7,8-dihydroneopterin 3'-triphosphate + formate + H(+). Its pathway is cofactor biosynthesis; 7,8-dihydroneopterin triphosphate biosynthesis; 7,8-dihydroneopterin triphosphate from GTP: step 1/1. This Allorhizobium ampelinum (strain ATCC BAA-846 / DSM 112012 / S4) (Agrobacterium vitis (strain S4)) protein is GTP cyclohydrolase 1.